Consider the following 717-residue polypeptide: Photosystem I P700 chlorophyll a apoprotein A1 (717 aa).

8 helical membrane-spanning segments follow: residues 58–81 (VFSAHFGQLSIIFLWLSGMYFHGA), 144–167 (LYCTAIGALVFAGLMLFAGWFHYH), 183–207 (LNHHLAGLLGLGSLSWAGHQVHVSL), 279–297 (IAHHHLAIAILFLIAGHMY), 334–357 (WHAQLSLNLAMLGSLTIVVAHHMY), 373–399 (LSLFTHHMWIGGFLIVGAAAHAAIFMV), 421–443 (AIISHLNWACIFLGFHSFGLYIH), and 519–537 (FLVHHIHAFTIHVTVLILL). 2 residues coordinate [4Fe-4S] cluster: cysteine 561 and cysteine 570. The next 2 helical transmembrane spans lie at 577 to 598 (HVFLGLFWMYNAISVVIFHFSW) and 652 to 674 (LSAYGLFFLGAHFVWAFSLMFLF). Histidine 663 contributes to the chlorophyll a' binding site. Residues methionine 671 and tyrosine 679 each contribute to the chlorophyll a site. Residue tryptophan 680 participates in phylloquinone binding. The chain crosses the membrane as a helical span at residues 712–717 (AVGVTH).

Belongs to the PsaA/PsaB family. As to quaternary structure, the PsaA/B heterodimer binds the P700 chlorophyll special pair and subsequent electron acceptors. PSI consists of a core antenna complex that captures photons, and an electron transfer chain that converts photonic excitation into a charge separation. The eukaryotic PSI reaction center is composed of at least 11 subunits. P700 is a chlorophyll a/chlorophyll a' dimer, A0 is one or more chlorophyll a, A1 is one or both phylloquinones and FX is a shared 4Fe-4S iron-sulfur center. serves as cofactor.

It is found in the plastid. The protein resides in the chloroplast thylakoid membrane. It carries out the reaction reduced [plastocyanin] + hnu + oxidized [2Fe-2S]-[ferredoxin] = oxidized [plastocyanin] + reduced [2Fe-2S]-[ferredoxin]. PsaA and PsaB bind P700, the primary electron donor of photosystem I (PSI), as well as the electron acceptors A0, A1 and FX. PSI is a plastocyanin-ferredoxin oxidoreductase, converting photonic excitation into a charge separation, which transfers an electron from the donor P700 chlorophyll pair to the spectroscopically characterized acceptors A0, A1, FX, FA and FB in turn. Oxidized P700 is reduced on the lumenal side of the thylakoid membrane by plastocyanin. This is Photosystem I P700 chlorophyll a apoprotein A1 from Drimys winteri (Winter's bark).